A 337-amino-acid polypeptide reads, in one-letter code: Probable sulfurtransferase (337 aa).

ATP is bound at residue G83. Residues C172 and C175 each coordinate [4Fe-4S] cluster. ATP is bound by residues K179 and G206. C284 is a [4Fe-4S] cluster binding site.

The protein belongs to the TtcA family. The cofactor is [4Fe-4S] cluster. Mg(2+) is required as a cofactor.

The protein is Probable sulfurtransferase of Methanocaldococcus jannaschii (strain ATCC 43067 / DSM 2661 / JAL-1 / JCM 10045 / NBRC 100440) (Methanococcus jannaschii).